An 87-amino-acid chain; its full sequence is U3-theraphotoxin-Hhn1a 3 (87 aa).

An N-terminal signal peptide occupies residues 1 to 24 (MVNMKASMFLTFAGLVLLFVVCYA). Positions 25–52 (PESEEKEFPKEMLSSIFAVDNDFKQEER) are excised as a propeptide. 3 cysteine pairs are disulfide-bonded: cysteine 54–cysteine 67, cysteine 61–cysteine 72, and cysteine 66–cysteine 79.

It belongs to the neurotoxin 10 (Hwtx-1) family. 51 (Hntx-8) subfamily. Hntx-8 sub-subfamily. As to expression, expressed by the venom gland.

Its subcellular location is the secreted. Functionally, ion channel inhibitor. The polypeptide is U3-theraphotoxin-Hhn1a 3 (Cyriopagopus hainanus (Chinese bird spider)).